Here is a 117-residue protein sequence, read N- to C-terminus: DNA-binding protein DDB_G0278111 (117 aa).

The disordered stretch occupies residues methionine 1 to glycine 40. Residues glutamine 8–glutamate 22 show a composition bias toward low complexity. Basic and acidic residues predominate over residues alanine 23–glutamine 39.

The protein belongs to the PDCD5 family.

This is DNA-binding protein DDB_G0278111 from Dictyostelium discoideum (Social amoeba).